Consider the following 413-residue polypeptide: MSSSVSPLAPKTVPDMPVIAGVRLATAEAGIRYKNRTDVLLAVMDKGTAVAGVFTKSKCPSAPVEWCRAKLKGGKARALVVNSGNANAFTGKTGRSSTALTAKIAAKAVGCSESEIFLASTGVIGEPLDATKFDGVLGRLAETAEPGDYLAAAKAIMTTDTFPKVATATVKLGKAKVTINGMAKGAGMIAPDMATMLSFVFTDAPIAPAALQALLKSGVEDTFNAVTIDGDTSTSDTLLAFATGAAAEHGAPKISRASDPRLKAFVKAFNQVLANLAEQVARDGEGARKLVEITVEGAKTKASARKIAMSIANSPLVKTAIAGEDANWGRVVMAVGKAGEPADRDKLSISFNGIRVARSGARDPDYDEAQVSEAMKAPEIAIKVSLGLGKGRDRVMTCDLTKEYVAINGDYRS.

Thr-158, Lys-184, Thr-195, Glu-285, Asn-408, and Ser-413 together coordinate substrate. Thr-195 acts as the Nucleophile in catalysis.

This sequence belongs to the ArgJ family. Heterotetramer of two alpha and two beta chains.

It localises to the cytoplasm. The catalysed reaction is N(2)-acetyl-L-ornithine + L-glutamate = N-acetyl-L-glutamate + L-ornithine. It carries out the reaction L-glutamate + acetyl-CoA = N-acetyl-L-glutamate + CoA + H(+). Its pathway is amino-acid biosynthesis; L-arginine biosynthesis; L-ornithine and N-acetyl-L-glutamate from L-glutamate and N(2)-acetyl-L-ornithine (cyclic): step 1/1. The protein operates within amino-acid biosynthesis; L-arginine biosynthesis; N(2)-acetyl-L-ornithine from L-glutamate: step 1/4. In terms of biological role, catalyzes two activities which are involved in the cyclic version of arginine biosynthesis: the synthesis of N-acetylglutamate from glutamate and acetyl-CoA as the acetyl donor, and of ornithine by transacetylation between N(2)-acetylornithine and glutamate. This Bradyrhizobium diazoefficiens (strain JCM 10833 / BCRC 13528 / IAM 13628 / NBRC 14792 / USDA 110) protein is Arginine biosynthesis bifunctional protein ArgJ.